The chain runs to 521 residues: Ribonuclease Y 1 (521 aa).

Residues 1 to 21 (MEIVISAIIGLLIGGTVVFVI) traverse the membrane as a helical segment. The disordered stretch occupies residues 51-87 (IKKESENKAKDFESRARKNVEQDIHKQKSTLKNKESQ). The KH domain maps to 211–271 (TVSVLALPND…VRRELARRTI (61 aa)). The 94-residue stretch at 337–430 (ALNQSLEVAT…VHAAYTLSSS (94 aa)) folds into the HD domain.

The protein belongs to the RNase Y family.

It localises to the cell membrane. In terms of biological role, endoribonuclease that initiates mRNA decay. This chain is Ribonuclease Y 1, found in Bdellovibrio bacteriovorus (strain ATCC 15356 / DSM 50701 / NCIMB 9529 / HD100).